The sequence spans 90 residues: Cuticle protein 9.5 (90 aa).

Component of the cuticle of migratory locust which contains more than 100 different structural proteins. This chain is Cuticle protein 9.5, found in Locusta migratoria (Migratory locust).